A 480-amino-acid chain; its full sequence is Cysteine--tRNA ligase (480 aa).

Cysteine 27 lines the Zn(2+) pocket. The short motif at 29-39 is the 'HIGH' region element; sequence PTVYNYAHIGN. Zn(2+) contacts are provided by cysteine 221, histidine 246, and glutamate 250. Residues 278–282 carry the 'KMSKS' region motif; the sequence is KMSKS. Lysine 281 is a binding site for ATP.

The protein belongs to the class-I aminoacyl-tRNA synthetase family. As to quaternary structure, monomer. The cofactor is Zn(2+).

The protein localises to the cytoplasm. The enzyme catalyses tRNA(Cys) + L-cysteine + ATP = L-cysteinyl-tRNA(Cys) + AMP + diphosphate. In Borrelia garinii subsp. bavariensis (strain ATCC BAA-2496 / DSM 23469 / PBi) (Borreliella bavariensis), this protein is Cysteine--tRNA ligase.